A 2442-amino-acid polypeptide reads, in one-letter code: Centrosome-associated protein CEP250 (2442 aa).

4 coiled-coil regions span residues 95-158 (NLDE…KESQ), 244-352 (AQLL…TQVM), 395-1172 (LTRR…EQQP), and 1243-2227 (SALH…KERL). Composition is skewed to basic and acidic residues over residues 1273-1289 (LTDTEAEKSQVHTELQD) and 1699-1715 (LTTQRQLMQERAEEGKG). 3 disordered regions span residues 1273–1308 (LTDTEAEKSQVHTELQDLQRQLSQNQEEKSKWEGKQ), 1699–1725 (LTTQRQLMQERAEEGKGPSKAQRGSLE), and 1820–1839 (EALQQEQQQAQGQEERVKEK). Positions 1820–1831 (EALQQEQQQAQG) are enriched in low complexity. Phosphoserine is present on S2138. T2218 carries the post-translational modification Phosphothreonine. Residues 2223-2244 (EKERLHSPGATSTAELGSRGEQ) form a disordered region. S2229, S2252, and S2322 each carry phosphoserine. Residues 2262 to 2376 (GMEKQSWRQR…RKQKQDYITR (115 aa)) adopt a coiled-coil conformation. Disordered regions lie at residues 2307 to 2345 (RRKLKREAMRAAQAGSLEISKATASSPTQQDGRGQKNSD) and 2416 to 2442 (ESLTQSLTSPGPVLLHPSPSTTQAASR). Over residues 2328–2338 (ATASSPTQQDG) the composition is skewed to polar residues. 2 positions are modified to phosphoserine; by NEK2: S2417 and S2421. A compositionally biased stretch (polar residues) spans 2433 to 2442 (SPSTTQAASR).

Monomer and homodimer. Forms a complex in vitro with both NEK2 kinase and the PPP1CC catalytic subunit of protein phosphatase 1 (PP1). Interacts with CEP135. Interacts with CROCC/rootletin. Interacts with CNTLN. Interacts with NIN (via C-terminus). Interacts with CCDC102B (via N-terminus); the interaction results in recruitment of CCDC102B to the proximal ends of centrioles. In terms of processing, differentially phosphorylated during cell cycle. Phosphorylation may regulate association/dissociation from centrosome. During M phase of mitosis, C-terminal part is phosphorylated by NEK2, suggesting that it may trigger the dissociation from the mitotic centrosome. Dephosphorylated in vitro by the PP1 phosphatase. Ubiquitously and weakly expressed.

The protein resides in the cytoplasm. It is found in the perinuclear region. The protein localises to the cytoskeleton. It localises to the microtubule organizing center. Its subcellular location is the centrosome. The protein resides in the centriole. It is found in the cilium basal body. The protein localises to the cell projection. It localises to the cilium. Its subcellular location is the photoreceptor outer segment. The protein resides in the photoreceptor inner segment. Plays an important role in centrosome cohesion during interphase. Recruits CCDC102B to the proximal ends of centrioles. Maintains centrosome cohesion by forming intercentriolar linkages. Accumulates at the proximal end of each centriole, forming supramolecular assemblies with viscous material properties that promote organelle cohesion. May be involved in ciliogenesis. In Homo sapiens (Human), this protein is Centrosome-associated protein CEP250 (CEP250).